Consider the following 692-residue polypeptide: Protein hook (692 aa).

In terms of domain architecture, Calponin-homology (CH) spans 6-123 (SEMYYSLLEW…RLLQLVLGCA (118 aa)). A coiled-coil region spans residues 135–576 (EIMGLEEELQ…YQSKVIQLET (442 aa)). The tract at residues 161–180 (AGERSPSSSASGGAGSGGAV) is disordered.

The protein belongs to the hook family. As to quaternary structure, homodimer. Interacts with microtubules via its N-terminus.

It localises to the cytoplasm. Its subcellular location is the cytoskeleton. The protein localises to the endosome. The protein resides in the synapse. Functionally, involved in endocytic trafficking by stabilizing organelles of the endocytic pathway. Probably acts as a cytoskeletal linker protein required to tether endosome vesicles to the cytoskeleton. Involved in modulation of endocytosis at stages required for down-regulation of membrane proteins that control synapse size. Not involved in synaptic vesicle recycling. Required in R7 cells for boss endocytosis into multivesicular bodies (MVBs). Has a role in regulating adult longevity. In Drosophila willistoni (Fruit fly), this protein is Protein hook.